Consider the following 234-residue polypeptide: tRNA1(Val) (adenine(37)-N6)-methyltransferase (234 aa).

Belongs to the methyltransferase superfamily. tRNA (adenine-N(6)-)-methyltransferase family.

The protein resides in the cytoplasm. It catalyses the reaction adenosine(37) in tRNA1(Val) + S-adenosyl-L-methionine = N(6)-methyladenosine(37) in tRNA1(Val) + S-adenosyl-L-homocysteine + H(+). Functionally, specifically methylates the adenine in position 37 of tRNA(1)(Val) (anticodon cmo5UAC). The sequence is that of tRNA1(Val) (adenine(37)-N6)-methyltransferase from Aliivibrio fischeri (strain ATCC 700601 / ES114) (Vibrio fischeri).